Reading from the N-terminus, the 367-residue chain is Dual specificity protein phosphatase 1 (367 aa).

In terms of domain architecture, Rhodanese spans 20–137 (GAAQCLLLDC…FSASCPELCS (118 aa)). Residues 173–314 (GPVEILSFLY…LLQFESQVLA (142 aa)) form the Tyrosine-protein phosphatase domain. Residue cysteine 258 is the Phosphocysteine intermediate of the active site. Serine 359 and serine 364 each carry phosphoserine; by MAPK1 and MAPK3.

Belongs to the protein-tyrosine phosphatase family. Non-receptor class dual specificity subfamily. Phosphorylation at Ser-359 and Ser-364 by MAPK1/ERK2 and MAPK3/ERK1 reduces its rate of degradation. In terms of processing, 'Lys-48'-linked polyubiquitinated by NEURL3, leading to proteasomal degradation.

The protein resides in the nucleus. The enzyme catalyses O-phospho-L-tyrosyl-[protein] + H2O = L-tyrosyl-[protein] + phosphate. The catalysed reaction is O-phospho-L-seryl-[protein] + H2O = L-seryl-[protein] + phosphate. It catalyses the reaction O-phospho-L-threonyl-[protein] + H2O = L-threonyl-[protein] + phosphate. Its function is as follows. Dual specificity phosphatase that dephosphorylates MAP kinase MAPK1/ERK2 on both 'Thr-183' and 'Tyr-185', regulating its activity during the meiotic cell cycle. In Mus musculus (Mouse), this protein is Dual specificity protein phosphatase 1.